Here is a 492-residue protein sequence, read N- to C-terminus: ATP synthase subunit beta, chloroplastic (492 aa).

170–177 (GGAGVGKT) is a binding site for ATP.

The protein belongs to the ATPase alpha/beta chains family. F-type ATPases have 2 components, CF(1) - the catalytic core - and CF(0) - the membrane proton channel. CF(1) has five subunits: alpha(3), beta(3), gamma(1), delta(1), epsilon(1). CF(0) has four main subunits: a(1), b(1), b'(1) and c(9-12).

It is found in the plastid. The protein resides in the chloroplast thylakoid membrane. It carries out the reaction ATP + H2O + 4 H(+)(in) = ADP + phosphate + 5 H(+)(out). Produces ATP from ADP in the presence of a proton gradient across the membrane. The catalytic sites are hosted primarily by the beta subunits. In Huperzia lucidula (Shining clubmoss), this protein is ATP synthase subunit beta, chloroplastic.